We begin with the raw amino-acid sequence, 260 residues long: Small ribosomal subunit protein eS1 (260 aa).

A compositionally biased stretch (basic residues) spans 1–18; the sequence is MAVGKNKRISKGKKGGKK. The segment at 1–22 is disordered; sequence MAVGKNKRISKGKKGGKKKAAD.

Belongs to the eukaryotic ribosomal protein eS1 family. In terms of assembly, component of the small ribosomal subunit. Mature ribosomes consist of a small (40S) and a large (60S) subunit. The 40S subunit contains about 33 different proteins and 1 molecule of RNA (18S). The 60S subunit contains about 49 different proteins and 3 molecules of RNA (25S, 5.8S and 5S).

The protein resides in the cytoplasm. The chain is Small ribosomal subunit protein eS1 from Helianthus annuus (Common sunflower).